The primary structure comprises 312 residues: Malate dehydrogenase (312 aa).

NAD(+)-binding positions include 7-13 (GAAGGIG) and aspartate 34. The substrate site is built by arginine 81 and arginine 87. NAD(+) is bound by residues asparagine 94 and 117–119 (ITN). Residues asparagine 119 and arginine 153 each coordinate substrate. The active-site Proton acceptor is histidine 177. NAD(+) is bound at residue methionine 227.

This sequence belongs to the LDH/MDH superfamily. MDH type 1 family. Homodimer.

It carries out the reaction (S)-malate + NAD(+) = oxaloacetate + NADH + H(+). Catalyzes the reversible oxidation of malate to oxaloacetate. The sequence is that of Malate dehydrogenase from Escherichia coli (strain SE11).